Here is a 125-residue protein sequence, read N- to C-terminus: Small ribosomal subunit protein uS13 (125 aa).

The interval 92 to 125 (RRSLPARGQRTRTNARTRKGKRKTVAGKKKAGKK) is disordered.

The protein belongs to the universal ribosomal protein uS13 family. In terms of assembly, part of the 30S ribosomal subunit. Forms a loose heterodimer with protein S19. Forms two bridges to the 50S subunit in the 70S ribosome.

In terms of biological role, located at the top of the head of the 30S subunit, it contacts several helices of the 16S rRNA. In the 70S ribosome it contacts the 23S rRNA (bridge B1a) and protein L5 of the 50S subunit (bridge B1b), connecting the 2 subunits; these bridges are implicated in subunit movement. Contacts the tRNAs in the A and P-sites. The polypeptide is Small ribosomal subunit protein uS13 (Chlorobaculum parvum (strain DSM 263 / NCIMB 8327) (Chlorobium vibrioforme subsp. thiosulfatophilum)).